The chain runs to 237 residues: Uridylate kinase (237 aa).

9–12 serves as a coordination point for ATP; it reads KLSG. Position 51 (G51) interacts with UMP. 2 residues coordinate ATP: G52 and R56. Residues D71 and 132–139 contribute to the UMP site; that span reads CGNPFFTT. T159, Y165, and D168 together coordinate ATP.

It belongs to the UMP kinase family. As to quaternary structure, homohexamer.

It localises to the cytoplasm. The enzyme catalyses UMP + ATP = UDP + ADP. It participates in pyrimidine metabolism; CTP biosynthesis via de novo pathway; UDP from UMP (UMPK route): step 1/1. Its activity is regulated as follows. Inhibited by UTP. Its function is as follows. Catalyzes the reversible phosphorylation of UMP to UDP. The chain is Uridylate kinase from Prochlorococcus marinus (strain MIT 9303).